A 445-amino-acid polypeptide reads, in one-letter code: Phosphoglucosamine mutase (445 aa).

Serine 102 functions as the Phosphoserine intermediate in the catalytic mechanism. Mg(2+) contacts are provided by serine 102, aspartate 241, aspartate 243, and aspartate 245. Position 102 is a phosphoserine (serine 102).

Belongs to the phosphohexose mutase family. Mg(2+) is required as a cofactor. Activated by phosphorylation.

The catalysed reaction is alpha-D-glucosamine 1-phosphate = D-glucosamine 6-phosphate. In terms of biological role, catalyzes the conversion of glucosamine-6-phosphate to glucosamine-1-phosphate. In Haemophilus influenzae (strain ATCC 51907 / DSM 11121 / KW20 / Rd), this protein is Phosphoglucosamine mutase.